Reading from the N-terminus, the 472-residue chain is GTPase HflX (472 aa).

The disordered stretch occupies residues Met1–Ala21. A Hflx-type G domain is found at Pro230–Ser396. Residues Gly236–Ser243, Phe261–Asp265, Asp283–Gly286, Asn349–Asp352, and Ser374–Lys376 contribute to the GTP site. Mg(2+)-binding residues include Ser243 and Thr263.

The protein belongs to the TRAFAC class OBG-HflX-like GTPase superfamily. HflX GTPase family. In terms of assembly, monomer. Associates with the 50S ribosomal subunit. It depends on Mg(2+) as a cofactor.

The protein localises to the cytoplasm. In terms of biological role, GTPase that associates with the 50S ribosomal subunit and may have a role during protein synthesis or ribosome biogenesis. Specific for GTP. The sequence is that of GTPase HflX from Chlamydia pneumoniae (Chlamydophila pneumoniae).